The sequence spans 344 residues: S-methyl-5'-thioadenosine phosphorylase (344 aa).

Residues Thr-45, 88 to 89 (RH), and 121 to 122 (SA) contribute to the phosphate site. Met-238 contributes to the substrate binding site. Ser-239 contacts phosphate. Substrate is bound at residue 262 to 264 (DYD).

Belongs to the PNP/MTAP phosphorylase family. MTAP subfamily. As to quaternary structure, homotrimer.

It localises to the cytoplasm. Its subcellular location is the nucleus. It carries out the reaction S-methyl-5'-thioadenosine + phosphate = 5-(methylsulfanyl)-alpha-D-ribose 1-phosphate + adenine. The protein operates within amino-acid biosynthesis; L-methionine biosynthesis via salvage pathway; S-methyl-5-thio-alpha-D-ribose 1-phosphate from S-methyl-5'-thioadenosine (phosphorylase route): step 1/1. Functionally, catalyzes the reversible phosphorylation of S-methyl-5'-thioadenosine (MTA) to adenine and 5-methylthioribose-1-phosphate. Involved in the breakdown of MTA, a major by-product of polyamine biosynthesis. Responsible for the first step in the methionine salvage pathway after MTA has been generated from S-adenosylmethionine. Has broad substrate specificity with 6-aminopurine nucleosides as preferred substrates. The protein is S-methyl-5'-thioadenosine phosphorylase of Candida albicans (strain SC5314 / ATCC MYA-2876) (Yeast).